The chain runs to 247 residues: Cell division protein ZapD (247 aa).

This sequence belongs to the ZapD family. As to quaternary structure, interacts with FtsZ.

The protein localises to the cytoplasm. Functionally, cell division factor that enhances FtsZ-ring assembly. Directly interacts with FtsZ and promotes bundling of FtsZ protofilaments, with a reduction in FtsZ GTPase activity. The sequence is that of Cell division protein ZapD from Salmonella dublin (strain CT_02021853).